A 1654-amino-acid polypeptide reads, in one-letter code: Microtubule cross-linking factor 2 (1654 aa).

The segment at 1-188 (METPAGESSA…VAASSVGSSR (188 aa)) is disordered. Positions 55–66 (GSATACGTASSA) are enriched in low complexity. A compositionally biased stretch (pro residues) spans 102-113 (GTGPRPPPPPPS). Low complexity predominate over residues 132–147 (LGLELALSSDAESAAG). The required for association with Golgi apparatus membrane stretch occupies residues 209–238 (PGGLVRELEELRSENDYLKDEIEELRAEML). 5 coiled-coil regions span residues 216 to 279 (LEEL…AERR), 308 to 349 (SMRL…LQTE), 448 to 546 (LKLV…YRSE), 816 to 843 (IKDL…ERQL), and 1079 to 1113 (SQEK…LQKA). The segment at 348 to 379 (TELDRPREHSLKKRGTRSLGKTDKKPTAQEDS) is disordered. Positions 1122-1145 (SDMEKQDNSWKEARSEKTHDKEGV) are enriched in basic and acidic residues. A disordered region spans residues 1122 to 1146 (SDMEKQDNSWKEARSEKTHDKEGVS). Residues serine 1165 and serine 1251 each carry the phosphoserine modification. A KR-rich domain required for microtubules binding region spans residues 1406-1505 (LVSVRSKQIS…HSGSTESVWK (100 aa)). Disordered stretches follow at residues 1427–1450 (RPCC…LDST), 1537–1560 (PTTA…YHQP), and 1627–1654 (NTIR…AAPQ). Over residues 1628 to 1638 (TIRHSPSKCRL) the composition is skewed to basic residues.

Belongs to the MTCL family. As to quaternary structure, interacts with CLASP2. Interacts with CLASP1. The C-terminal SOGA 25 kDa form occurs as a monomer. Proteolytically cleaved into a C-terminal SOGA 25 kDa form that is detected in plasma. Proteolytically cleaved in primary hepatocytes into a C-terminal SOGA 80 kDa form. In terms of processing, phosphorylated during mitosis in a CDK1-dependent manner. In terms of tissue distribution, expressed in liver (at protein level).

It localises to the secreted. It is found in the cytoplasm. The protein localises to the cytoskeleton. Its subcellular location is the golgi apparatus membrane. The protein resides in the midbody. In terms of biological role, microtubule-associated factor that enables integration of the centrosomal and Golgi-associated microtubules on the Golgi membrane, supporting directional migration. Preferentially acts on the perinuclear microtubules accumulated around the Golgi. Associates with the Golgi membrane through the N-terminal coiled-coil region and directly binds microtubules through the C-terminal domain. Required for faithful chromosome segregation during mitosis. Regulates autophagy by playing a role in the reduction of glucose production in an adiponectin- and insulin-dependent manner. In Mus musculus (Mouse), this protein is Microtubule cross-linking factor 2 (Mtcl2).